The sequence spans 120 residues: Glycine cleavage system H protein (120 aa).

A Lipoyl-binding domain is found at 17 to 99; sequence VATVGITNYA…QGAGWFFKLK (83 aa). Residue Lys-58 is modified to N6-lipoyllysine.

This sequence belongs to the GcvH family. In terms of assembly, the glycine cleavage system is composed of four proteins: P, T, L and H. (R)-lipoate is required as a cofactor.

In terms of biological role, the glycine cleavage system catalyzes the degradation of glycine. The H protein shuttles the methylamine group of glycine from the P protein to the T protein. In Rhizobium leguminosarum bv. trifolii (strain WSM2304), this protein is Glycine cleavage system H protein.